The following is a 211-amino-acid chain: FMN-dependent NADH:quinone oxidoreductase 2 (211 aa).

FMN is bound by residues Ser-10 and 17–19 (SRS).

Belongs to the azoreductase type 1 family. Homodimer. Requires FMN as cofactor.

It carries out the reaction 2 a quinone + NADH + H(+) = 2 a 1,4-benzosemiquinone + NAD(+). It catalyses the reaction N,N-dimethyl-1,4-phenylenediamine + anthranilate + 2 NAD(+) = 2-(4-dimethylaminophenyl)diazenylbenzoate + 2 NADH + 2 H(+). In terms of biological role, quinone reductase that provides resistance to thiol-specific stress caused by electrophilic quinones. Also exhibits azoreductase activity. Catalyzes the reductive cleavage of the azo bond in aromatic azo compounds to the corresponding amines. This Listeria innocua serovar 6a (strain ATCC BAA-680 / CLIP 11262) protein is FMN-dependent NADH:quinone oxidoreductase 2.